Here is a 255-residue protein sequence, read N- to C-terminus: Taurine import ATP-binding protein TauB (255 aa).

The region spanning 2–229 (LQISHLYADY…RFVAGESSRS (228 aa)) is the ABC transporter domain. Residue 34-41 (GPSGCGKT) participates in ATP binding.

The protein belongs to the ABC transporter superfamily. Taurine importer (TC 3.A.1.17.1) family. In terms of assembly, the complex is composed of two ATP-binding proteins (TauB), two transmembrane proteins (TauC) and a solute-binding protein (TauA).

The protein resides in the cell inner membrane. The enzyme catalyses taurine(out) + ATP + H2O = taurine(in) + ADP + phosphate + H(+). Part of the ABC transporter complex TauABC involved in taurine import. Responsible for energy coupling to the transport system. This Shigella flexneri serotype 5b (strain 8401) protein is Taurine import ATP-binding protein TauB.